An 89-amino-acid chain; its full sequence is Co-chaperonin GroES (89 aa).

This sequence belongs to the GroES chaperonin family. In terms of assembly, heptamer of 7 subunits arranged in a ring. Interacts with the chaperonin GroEL.

It is found in the cytoplasm. Functionally, together with the chaperonin GroEL, plays an essential role in assisting protein folding. The GroEL-GroES system forms a nano-cage that allows encapsulation of the non-native substrate proteins and provides a physical environment optimized to promote and accelerate protein folding. GroES binds to the apical surface of the GroEL ring, thereby capping the opening of the GroEL channel. The chain is Co-chaperonin GroES from Parabacteroides distasonis (strain ATCC 8503 / DSM 20701 / CIP 104284 / JCM 5825 / NCTC 11152).